A 429-amino-acid chain; its full sequence is D-amino acid dehydrogenase (429 aa).

3–17 (VVVLGSGVVGVTSAY) is an FAD binding site.

This sequence belongs to the DadA oxidoreductase family. The cofactor is FAD.

It carries out the reaction a D-alpha-amino acid + A + H2O = a 2-oxocarboxylate + AH2 + NH4(+). It participates in amino-acid degradation; D-alanine degradation; NH(3) and pyruvate from D-alanine: step 1/1. Oxidative deamination of D-amino acids. The sequence is that of D-amino acid dehydrogenase from Paraburkholderia xenovorans (strain LB400).